Consider the following 150-residue polypeptide: MKAIFIILAILMVTQAFKMTSKVNTKLQSQIQSKFQSKNKLASTFQTSSKLKGECDTIIPDFTGCNANDACPLSFTCSATGNDEQLCNAAGQNVIDMIFAHWSTCWNTYGNCIEFARQTYAIYNAPELCGCDYVDEETWINTLESVCPYV.

The signal sequence occupies residues 1 to 16 (MKAIFIILAILMVTQA). Residues 17-52 (FKMTSKVNTKLQSQIQSKFQSKNKLASTFQTSSKLK) constitute a propeptide that is removed on maturation.

The protein localises to the secreted. Mating ciliate pheromones (or gamones) are diffusible extracellular communication signals that distinguish different intraspecific classes of cells commonly referred to as 'mating types'. They prepare the latter for conjugation by changing their cell surface properties. The protein is Mating pheromone 1 of Euplotoides octocarinatus (Freshwater ciliate).